We begin with the raw amino-acid sequence, 86 residues long: Putative membrane protein insertion efficiency factor (86 aa).

The tract at residues 66–86 (FSKGGFDPVPPHDGVPGKKED) is disordered.

The protein belongs to the UPF0161 family.

Its subcellular location is the cell inner membrane. Functionally, could be involved in insertion of integral membrane proteins into the membrane. This is Putative membrane protein insertion efficiency factor from Chlorobium luteolum (strain DSM 273 / BCRC 81028 / 2530) (Pelodictyon luteolum).